The sequence spans 332 residues: Aerobic cobaltochelatase subunit CobS (332 aa).

As to quaternary structure, heterotrimer of CobN, CobS and CobT.

It is found in the cytoplasm. The catalysed reaction is hydrogenobyrinate a,c-diamide + Co(2+) + ATP + H2O = cob(II)yrinate a,c diamide + ADP + phosphate + 5 H(+). Its pathway is cofactor biosynthesis; adenosylcobalamin biosynthesis; cob(II)yrinate a,c-diamide from precorrin-2 (aerobic route): step 10/10. In terms of biological role, catalyzes cobalt insertion in the corrin ring. The chain is Aerobic cobaltochelatase subunit CobS (cobS) from Sinorhizobium sp.